The chain runs to 615 residues: DNA mismatch repair protein MutL (615 aa).

Residues 378 to 391 (PAPASGSRPAAPWP) are compositionally biased toward low complexity. The disordered stretch occupies residues 378–397 (PAPASGSRPAAPWPNAQPGY).

Belongs to the DNA mismatch repair MutL/HexB family.

In terms of biological role, this protein is involved in the repair of mismatches in DNA. It is required for dam-dependent methyl-directed DNA mismatch repair. May act as a 'molecular matchmaker', a protein that promotes the formation of a stable complex between two or more DNA-binding proteins in an ATP-dependent manner without itself being part of a final effector complex. This chain is DNA mismatch repair protein MutL, found in Escherichia coli O127:H6 (strain E2348/69 / EPEC).